Here is a 241-residue protein sequence, read N- to C-terminus: MIINAKGPASFAEKYIVRSIWENKFPPGSILPAERELSELIGVTRTTLREVLQRLARDGWLKIQHGKPTRVNNFWETSGLNILETIADLNPEGFPVLVDQLLSARTNVSAIYFRGALRNSPDTAVEVLGQIHQLEDTAESFAEYDYLLHHTLAFSSGNPLYVLILNGFKGLYSRVGRYYFSSPEARQLALNFYKELEILAKAKNYIDVPALMRTYGINSGKMWLQLRDDMPSSIAQQDGNA.

In terms of domain architecture, HTH gntR-type spans 6–74 (KGPASFAEKY…HGKPTRVNNF (69 aa)). The H-T-H motif DNA-binding region spans 34-53 (ERELSELIGVTRTTLREVLQ).

As to quaternary structure, homodimer.

The protein localises to the cytoplasm. Multifunctional regulator of fatty acid metabolism. In Shewanella sp. (strain ANA-3), this protein is Fatty acid metabolism regulator protein.